Consider the following 266-residue polypeptide: HTH-type transcriptional regulator MurR (266 aa).

One can recognise an HTH rpiR-type domain in the interval 1 to 77 (MLYLTKIRNA…MALIGEYSAS (77 aa)). The segment at residues 37–56 (SRQMAKQLGISQSSIVKFAQ) is a DNA-binding region (H-T-H motif). One can recognise an SIS domain in the interval 128-266 (IIEVISKAPF…LLFVGLVQHQ (139 aa)).

As to quaternary structure, homotetramer.

It participates in amino-sugar metabolism; N-acetylmuramate degradation [regulation]. Its function is as follows. Represses the expression of the murPQ operon involved in the uptake and degradation of N-acetylmuramic acid (MurNAc). Binds to two adjacent inverted repeats within the operator region. MurNAc 6-phosphate, the substrate of MurQ, is the specific inducer that weakens binding of MurR to the operator. The protein is HTH-type transcriptional regulator MurR of Shigella flexneri serotype 5b (strain 8401).